The primary structure comprises 739 residues: Catalase-peroxidase 2 (739 aa).

The first 26 residues, 1-26 (MKKSTIPSMSALTLAMSLAFGGAAIA), serve as a signal peptide directing secretion. A cross-link (tryptophyl-tyrosyl-methioninium (Trp-Tyr) (with M-253)) is located at residues 105 to 227 (WHSAGVYRIF…MGATQMGLIY (123 aa)). The Proton acceptor role is filled by histidine 106. The segment at residues 227–253 (YVNPEGPNGVPDPLASAKEIRDTFGRM) is a cross-link (tryptophyl-tyrosyl-methioninium (Tyr-Met) (with W-105)). Histidine 268 contributes to the heme b binding site.

Belongs to the peroxidase family. Peroxidase/catalase subfamily. As to quaternary structure, homodimer or homotetramer. It depends on heme b as a cofactor. Formation of the three residue Trp-Tyr-Met cross-link is important for the catalase, but not the peroxidase activity of the enzyme.

The enzyme catalyses H2O2 + AH2 = A + 2 H2O. The catalysed reaction is 2 H2O2 = O2 + 2 H2O. Functionally, bifunctional enzyme with both catalase and broad-spectrum peroxidase activity. This Shewanella sp. (strain ANA-3) protein is Catalase-peroxidase 2.